We begin with the raw amino-acid sequence, 451 residues long: GTPase Der (451 aa).

EngA-type G domains are found at residues proline 5–proline 170 and isoleucine 186–phenylalanine 359. GTP contacts are provided by residues glycine 11 to serine 18, aspartate 58 to phenylalanine 62, asparagine 122 to glutamate 125, glycine 192 to serine 199, aspartate 239 to leucine 243, and asparagine 304 to aspartate 307. The KH-like domain maps to alanine 360 to arginine 444.

The protein belongs to the TRAFAC class TrmE-Era-EngA-EngB-Septin-like GTPase superfamily. EngA (Der) GTPase family. In terms of assembly, associates with the 50S ribosomal subunit.

Functionally, GTPase that plays an essential role in the late steps of ribosome biogenesis. This chain is GTPase Der, found in Bordetella bronchiseptica (strain ATCC BAA-588 / NCTC 13252 / RB50) (Alcaligenes bronchisepticus).